The following is a 262-amino-acid chain: Tryptophan synthase alpha chain (262 aa).

Residues Glu-49 and Asp-60 each act as proton acceptor in the active site.

It belongs to the TrpA family. Tetramer of two alpha and two beta chains.

The catalysed reaction is (1S,2R)-1-C-(indol-3-yl)glycerol 3-phosphate + L-serine = D-glyceraldehyde 3-phosphate + L-tryptophan + H2O. Its pathway is amino-acid biosynthesis; L-tryptophan biosynthesis; L-tryptophan from chorismate: step 5/5. Its function is as follows. The alpha subunit is responsible for the aldol cleavage of indoleglycerol phosphate to indole and glyceraldehyde 3-phosphate. The polypeptide is Tryptophan synthase alpha chain (Aquifex aeolicus (strain VF5)).